A 152-amino-acid chain; its full sequence is Large ribosomal subunit protein bL9 (152 aa).

This sequence belongs to the bacterial ribosomal protein bL9 family.

Functionally, binds to the 23S rRNA. The sequence is that of Large ribosomal subunit protein bL9 from Synechococcus sp. (strain CC9605).